We begin with the raw amino-acid sequence, 239 residues long: 1-(5-phosphoribosyl)-5-[(5-phosphoribosylamino)methylideneamino] imidazole-4-carboxamide isomerase (239 aa).

The active-site Proton acceptor is Asp-8. Catalysis depends on Asp-129, which acts as the Proton donor.

This sequence belongs to the HisA/HisF family.

Its subcellular location is the cytoplasm. It catalyses the reaction 1-(5-phospho-beta-D-ribosyl)-5-[(5-phospho-beta-D-ribosylamino)methylideneamino]imidazole-4-carboxamide = 5-[(5-phospho-1-deoxy-D-ribulos-1-ylimino)methylamino]-1-(5-phospho-beta-D-ribosyl)imidazole-4-carboxamide. Its pathway is amino-acid biosynthesis; L-histidine biosynthesis; L-histidine from 5-phospho-alpha-D-ribose 1-diphosphate: step 4/9. The chain is 1-(5-phosphoribosyl)-5-[(5-phosphoribosylamino)methylideneamino] imidazole-4-carboxamide isomerase from Bacillus thuringiensis subsp. konkukian (strain 97-27).